The chain runs to 141 residues: Nucleoside diphosphate kinase (141 aa).

ATP is bound by residues Lys-11, Phe-59, Arg-87, Thr-93, Arg-104, and Asn-114. His-117 acts as the Pros-phosphohistidine intermediate in catalysis.

It belongs to the NDK family. Homotetramer. It depends on Mg(2+) as a cofactor.

The protein localises to the cytoplasm. The enzyme catalyses a 2'-deoxyribonucleoside 5'-diphosphate + ATP = a 2'-deoxyribonucleoside 5'-triphosphate + ADP. The catalysed reaction is a ribonucleoside 5'-diphosphate + ATP = a ribonucleoside 5'-triphosphate + ADP. In terms of biological role, major role in the synthesis of nucleoside triphosphates other than ATP. The ATP gamma phosphate is transferred to the NDP beta phosphate via a ping-pong mechanism, using a phosphorylated active-site intermediate. The protein is Nucleoside diphosphate kinase of Bordetella bronchiseptica (strain ATCC BAA-588 / NCTC 13252 / RB50) (Alcaligenes bronchisepticus).